Reading from the N-terminus, the 203-residue chain is Putative GPI-anchored protein YHR214W (203 aa).

The signal sequence occupies residues M1–G23. Residues N28 and N138 are each glycosylated (N-linked (GlcNAc...) asparagine). N184 is lipidated: GPI-anchor amidated asparagine. The propeptide at A185–L203 is removed in mature form.

It localises to the cell membrane. This chain is Putative GPI-anchored protein YHR214W, found in Saccharomyces cerevisiae (strain ATCC 204508 / S288c) (Baker's yeast).